We begin with the raw amino-acid sequence, 547 residues long: Calcium-dependent protein kinase 16 (547 aa).

The segment at 1–53 is disordered; it reads MGNCCRSPAAAAREDVKTSHFPASTGGGKKKPHQARNGGGGGGGGGGGGWEKK. A lipid anchor (N-myristoyl glycine) is attached at G2. The segment covering 37-49 has biased composition (gly residues); it reads NGGGGGGGGGGGG. The 259-residue stretch at 73–331 folds into the Protein kinase domain; it reads YALDRELGRG…AKQVLEHTWL (259 aa). ATP contacts are provided by residues 79–87 and K102; that span reads LGRGEFGVT. Catalysis depends on D197, which acts as the Proton acceptor. Residues 337–367 are autoinhibitory domain; sequence APNVPLGDIVKSRLKQFSRMNRFKRRALRVI. EF-hand domains are found at residues 374–409, 410–445, 446–481, and 482–517; these read EEVEDIKDMFKVMDTDNDGIVSYEELKSGIAKFGSH, LAESEVQMLIEAVDTNGRGALDYGEFLAVSLHLQRM, ANGEHLRRAFLFFDKDGNGYIEPEELQEALVEDGAT, and DIMEVVKDILQEVDTDKDGKISYEEFVAMMKTGTDW. Ca(2+)-binding residues include D387, D389, D391, E398, D423, N425, E434, D459, D461, N463, Y465, E470, D495, D497, D499, K501, and E506.

It belongs to the protein kinase superfamily. Ser/Thr protein kinase family. CDPK subfamily.

Its subcellular location is the membrane. The enzyme catalyses L-seryl-[protein] + ATP = O-phospho-L-seryl-[protein] + ADP + H(+). It catalyses the reaction L-threonyl-[protein] + ATP = O-phospho-L-threonyl-[protein] + ADP + H(+). With respect to regulation, activated by calcium. Autophosphorylation may play an important role in the regulation of the kinase activity. In terms of biological role, may play a role in signal transduction pathways that involve calcium as a second messenger. In Oryza sativa subsp. japonica (Rice), this protein is Calcium-dependent protein kinase 16.